The sequence spans 559 residues: Urocanate hydratase (559 aa).

NAD(+) is bound by residues 54-55 (GG), glutamine 132, 178-180 (GMG), glutamate 198, arginine 203, 244-245 (NA), 265-269 (QTSAH), 275-276 (YL), and tyrosine 324. Residue cysteine 412 is part of the active site. Position 494 (glycine 494) interacts with NAD(+).

This sequence belongs to the urocanase family. Requires NAD(+) as cofactor.

The protein resides in the cytoplasm. It catalyses the reaction 4-imidazolone-5-propanoate = trans-urocanate + H2O. Its pathway is amino-acid degradation; L-histidine degradation into L-glutamate; N-formimidoyl-L-glutamate from L-histidine: step 2/3. Its function is as follows. Catalyzes the conversion of urocanate to 4-imidazolone-5-propionate. This is Urocanate hydratase from Azotobacter vinelandii (strain DJ / ATCC BAA-1303).